The sequence spans 195 residues: Rho-related protein racB (195 aa).

10 to 17 (GDGAVGKT) lines the GTP pocket. Residues 32 to 40 (YVPTVFDNY) carry the Effector region motif. GTP is bound by residues 57–61 (DTAGQ) and 115–118 (TKCD). A Cysteine methyl ester modification is found at Cys-192. Cys-192 is lipidated: S-geranylgeranyl cysteine. Residues 193–195 (SIL) constitute a propeptide, removed in mature form.

Belongs to the small GTPase superfamily. Rho family. In terms of assembly, interacts with pakB.

Its subcellular location is the cell membrane. The chain is Rho-related protein racB (racB) from Dictyostelium discoideum (Social amoeba).